The sequence spans 111 residues: Putative protein YddJ (111 aa).

The chain is Putative protein YddJ (yddJ) from Escherichia coli (strain K12).